Consider the following 1503-residue polypeptide: Dynein axonemal assembly factor 1 homolog (1503 aa).

6 LRR repeats span residues 34 to 56 (RLNDVLYLHYQGFQCIENLEEYT), 57 to 78 (ELKCLWLECNAISEIQGLEKLG), 79 to 100 (KLKCLFLQNNLITKIENLDPCR), 101 to 122 (ELDTLNLSSNHIRKIQNIGTNI), 125 to 146 (VLNTLTIASNYLKDSDSLSDLI), and 150 to 171 (TLSVLDLSNNRIDDILIVKIFE). Residues 185–223 (PVVSRLPQYRKTLILACKELTYLDSRPVFPRDRACAEAW) form the LRRCT domain. Disordered stretches follow at residues 249-280 (SINCTIRMRNSHRPPDQQDPLLRSSDSEDDTC), 305-328 (EQPISDHGTSTSSSVEDKDGTSSQ), 956-1033 (DSGD…DHDE), and 1295-1315 (STNNHSFSTKKTLPTKTSTSE). A compositionally biased stretch (acidic residues) spans 973-985 (TESEDYDTAEDEY). Residues 1014 to 1031 (QKQDKPDTVEEVGKKNDH) show a composition bias toward basic and acidic residues. A compositionally biased stretch (low complexity) spans 1303 to 1314 (TKKTLPTKTSTS).

Belongs to the DNAAF1 family.

The protein localises to the cell projection. The protein resides in the cilium. Cilium-specific protein required for cilia structures. The protein is Dynein axonemal assembly factor 1 homolog (dtr) of Drosophila erecta (Fruit fly).